The sequence spans 436 residues: 3-phosphoshikimate 1-carboxyvinyltransferase (436 aa).

3 residues coordinate 3-phosphoshikimate: Lys-22, Ser-23, and Arg-27. Phosphoenolpyruvate is bound at residue Lys-22. Residues Gly-95 and Arg-123 each coordinate phosphoenolpyruvate. Residues Ser-170, Ser-171, Gln-172, Ser-201, Asp-322, and Lys-349 each coordinate 3-phosphoshikimate. Gln-172 provides a ligand contact to phosphoenolpyruvate. Asp-322 functions as the Proton acceptor in the catalytic mechanism. Arg-353, Arg-397, and Lys-422 together coordinate phosphoenolpyruvate.

It belongs to the EPSP synthase family. Monomer.

Its subcellular location is the cytoplasm. The catalysed reaction is 3-phosphoshikimate + phosphoenolpyruvate = 5-O-(1-carboxyvinyl)-3-phosphoshikimate + phosphate. The protein operates within metabolic intermediate biosynthesis; chorismate biosynthesis; chorismate from D-erythrose 4-phosphate and phosphoenolpyruvate: step 6/7. Its function is as follows. Catalyzes the transfer of the enolpyruvyl moiety of phosphoenolpyruvate (PEP) to the 5-hydroxyl of shikimate-3-phosphate (S3P) to produce enolpyruvyl shikimate-3-phosphate and inorganic phosphate. The polypeptide is 3-phosphoshikimate 1-carboxyvinyltransferase (Ralstonia nicotianae (strain ATCC BAA-1114 / GMI1000) (Ralstonia solanacearum)).